A 1079-amino-acid polypeptide reads, in one-letter code: Capping protein inhibiting regulator of actin dynamics (1079 aa).

Over residues 1–11 the composition is skewed to basic and acidic residues; the sequence is MSQENVSDKVR. Disordered regions lie at residues 1-293, 308-327, 341-383, 420-453, 493-522, 606-639, and 658-1054; these read MSQE…EEER, ERKR…AEKR, EHRI…EWKR, PVTP…PTLS, EGKK…VFES, IFGQ…VQSR, and PSFL…TTQV. The segment covering 36-45 has biased composition (acidic residues); it reads DEGSSDEEEV. The span at 64 to 76 shows a compositional bias: basic and acidic residues; the sequence is SAKEKSVSHDTVQ. Basic residues predominate over residues 115 to 134; it reads AKHKLSVKPKNQRVSRKHRR. A compositionally biased stretch (acidic residues) spans 140–158; it reads HEDDFSEIQEEFEKDEEVF. A compositionally biased stretch (basic and acidic residues) spans 159-293; it reads DSSREDYGII…EERKRAEEER (135 aa). Over residues 420–434 the composition is skewed to polar residues; sequence PVTPATGQQGETTAE. Residues 670 to 682 are compositionally biased toward polar residues; the sequence is PKSQRSESGSPIQ. Over residues 684-695 the composition is skewed to acidic residues; that stretch reads ESEDSDTKDEDG. Over residues 756-781 the composition is skewed to polar residues; that stretch reads DNSTLSEKSSPISPQQENIEFQTTVA. Composition is skewed to basic and acidic residues over residues 896–930 and 944–983; these read WREK…DKET and GFRE…EDKG. The segment covering 984 to 993 has biased composition (polar residues); that stretch reads NGSSSIISKH. Over residues 994–1016 the composition is skewed to basic and acidic residues; the sequence is QTADENKRPDTLLARFERRDNLK. The span at 1020–1033 shows a compositional bias: polar residues; sequence TLPSSVTVEITDST.

In terms of assembly, directly interacts with actin-capping proteins; this interaction decreases the binding of capping proteins to actin.

It localises to the cytoplasm. Its subcellular location is the cytosol. Involved in epithelial cell integrity by acting on the maintenance of the actin cytoskeleton. Positively regulates the actin polymerization, by inhibiting the interaction of actin-capping proteins with actin. This is Capping protein inhibiting regulator of actin dynamics (crad) from Danio rerio (Zebrafish).